The following is a 211-amino-acid chain: Urease accessory protein UreG (211 aa).

11–18 (GPVGAGKT) serves as a coordination point for GTP.

This sequence belongs to the SIMIBI class G3E GTPase family. UreG subfamily. In terms of assembly, homodimer. UreD, UreF and UreG form a complex that acts as a GTP-hydrolysis-dependent molecular chaperone, activating the urease apoprotein by helping to assemble the nickel containing metallocenter of UreC. The UreE protein probably delivers the nickel.

It localises to the cytoplasm. In terms of biological role, facilitates the functional incorporation of the urease nickel metallocenter. This process requires GTP hydrolysis, probably effectuated by UreG. This chain is Urease accessory protein UreG, found in Actinobacillus pleuropneumoniae (Haemophilus pleuropneumoniae).